The following is a 286-amino-acid chain: Bifunctional protein FolD (286 aa).

166 to 168 (GAS) contributes to the NADP(+) binding site.

This sequence belongs to the tetrahydrofolate dehydrogenase/cyclohydrolase family. As to quaternary structure, homodimer.

It carries out the reaction (6R)-5,10-methylene-5,6,7,8-tetrahydrofolate + NADP(+) = (6R)-5,10-methenyltetrahydrofolate + NADPH. The enzyme catalyses (6R)-5,10-methenyltetrahydrofolate + H2O = (6R)-10-formyltetrahydrofolate + H(+). The protein operates within one-carbon metabolism; tetrahydrofolate interconversion. Catalyzes the oxidation of 5,10-methylenetetrahydrofolate to 5,10-methenyltetrahydrofolate and then the hydrolysis of 5,10-methenyltetrahydrofolate to 10-formyltetrahydrofolate. The chain is Bifunctional protein FolD from Idiomarina loihiensis (strain ATCC BAA-735 / DSM 15497 / L2-TR).